A 554-amino-acid polypeptide reads, in one-letter code: Hydroxylamine reductase (554 aa).

4 residues coordinate [2Fe-2S] cluster: Cys3, Cys6, Cys18, and Cys25. His252, Glu276, Cys320, Cys408, Cys436, Cys461, Glu495, and Lys497 together coordinate hybrid [4Fe-2O-2S] cluster. A Cysteine persulfide modification is found at Cys408.

This sequence belongs to the HCP family. It depends on [2Fe-2S] cluster as a cofactor. Hybrid [4Fe-2O-2S] cluster serves as cofactor.

It is found in the cytoplasm. The catalysed reaction is A + NH4(+) + H2O = hydroxylamine + AH2 + H(+). Catalyzes the reduction of hydroxylamine to form NH(3) and H(2)O. The sequence is that of Hydroxylamine reductase from Photobacterium profundum (strain SS9).